Here is a 260-residue protein sequence, read N- to C-terminus: Snake venom serine protease homolog 1 (260 aa).

The signal sequence occupies residues 1–18 (MVLIRVLANLLILQLSYA). Positions 19–24 (QKSSEL) are excised as a propeptide. Residues 25–251 (IIGGDECNIN…HLDWIKSIIA (227 aa)) form the Peptidase S1 domain. 6 disulfide bridges follow: Cys-31/Cys-165, Cys-52/Cys-68, Cys-100/Cys-258, Cys-144/Cys-212, Cys-176/Cys-191, and Cys-202/Cys-227. N-linked (GlcNAc...) asparagine glycans are attached at residues Asn-83, Asn-123, and Asn-124.

Belongs to the peptidase S1 family. Snake venom subfamily. As to expression, expressed by the venom gland.

It is found in the secreted. Its function is as follows. Snake venom serine protease homolog that may act in the hemostasis system of the prey. This chain is Snake venom serine protease homolog 1, found in Trimeresurus stejnegeri (Chinese green tree viper).